The chain runs to 502 residues: Probable glycerol kinase (502 aa).

Threonine 11 is a substrate binding site. Arginine 15 lines the ATP pocket. Positions 85, 140, and 246 each coordinate substrate. ATP is bound by residues threonine 268, glycine 313, and 416–420 (GMIAN).

Belongs to the FGGY kinase family.

It catalyses the reaction glycerol + ATP = sn-glycerol 3-phosphate + ADP + H(+). It functions in the pathway polyol metabolism; glycerol degradation via glycerol kinase pathway; sn-glycerol 3-phosphate from glycerol: step 1/1. This is Probable glycerol kinase from Caenorhabditis elegans.